A 685-amino-acid chain; its full sequence is Translation initiation factor IF-2 (685 aa).

The tr-type G domain occupies lysine 185 to lysine 354. Positions glycine 194–threonine 201 are G1. Glycine 194–threonine 201 provides a ligand contact to GTP. The segment at glycine 219–histidine 223 is G2. Residues aspartate 240 to glycine 243 form a G3 region. GTP-binding positions include aspartate 240–histidine 244 and asparagine 294–aspartate 297. Positions asparagine 294 to aspartate 297 are G4. The segment at serine 330–histidine 332 is G5.

This sequence belongs to the TRAFAC class translation factor GTPase superfamily. Classic translation factor GTPase family. IF-2 subfamily.

The protein resides in the cytoplasm. One of the essential components for the initiation of protein synthesis. Protects formylmethionyl-tRNA from spontaneous hydrolysis and promotes its binding to the 30S ribosomal subunits. Also involved in the hydrolysis of GTP during the formation of the 70S ribosomal complex. The sequence is that of Translation initiation factor IF-2 from Clostridium tetani (strain Massachusetts / E88).